Here is a 247-residue protein sequence, read N- to C-terminus: Probable transcriptional regulatory protein lpg1286 (247 aa).

The protein belongs to the TACO1 family.

Its subcellular location is the cytoplasm. The protein is Probable transcriptional regulatory protein lpg1286 of Legionella pneumophila subsp. pneumophila (strain Philadelphia 1 / ATCC 33152 / DSM 7513).